The sequence spans 450 residues: Phosphoglucosamine mutase (450 aa).

The active-site Phosphoserine intermediate is S102. Mg(2+) is bound by residues S102, D243, D245, and D247. At S102 the chain carries Phosphoserine.

This sequence belongs to the phosphohexose mutase family. It depends on Mg(2+) as a cofactor. Activated by phosphorylation.

It catalyses the reaction alpha-D-glucosamine 1-phosphate = D-glucosamine 6-phosphate. Catalyzes the conversion of glucosamine-6-phosphate to glucosamine-1-phosphate. The chain is Phosphoglucosamine mutase from Rhizobium meliloti (strain 1021) (Ensifer meliloti).